The sequence spans 305 residues: Tyrosine recombinase XerC (305 aa).

In terms of domain architecture, Core-binding (CB) spans 4-95; the sequence is TSIQALINKW…AVKNFYRFLE (92 aa). One can recognise a Tyr recombinase domain in the interval 116–298; sequence LLPKALSEDD…SIKHLEAVYT (183 aa). Active-site residues include Arg159, Lys182, His250, Arg253, and His276. The O-(3'-phospho-DNA)-tyrosine intermediate role is filled by Tyr285.

The protein belongs to the 'phage' integrase family. XerC subfamily. In terms of assembly, forms a cyclic heterotetrameric complex composed of two molecules of XerC and two molecules of XerD.

The protein localises to the cytoplasm. Its function is as follows. Site-specific tyrosine recombinase, which acts by catalyzing the cutting and rejoining of the recombining DNA molecules. The XerC-XerD complex is essential to convert dimers of the bacterial chromosome into monomers to permit their segregation at cell division. It also contributes to the segregational stability of plasmids. The polypeptide is Tyrosine recombinase XerC (Rickettsia peacockii (strain Rustic)).